A 130-amino-acid chain; its full sequence is Glycine cleavage system H protein (130 aa).

The 83-residue stretch at 25–107 (IATIGITEFA…YGEGWFLKVR (83 aa)) folds into the Lipoyl-binding domain. Position 66 is an N6-lipoyllysine (Lys-66).

This sequence belongs to the GcvH family. As to quaternary structure, the glycine cleavage system is composed of four proteins: P, T, L and H. Requires (R)-lipoate as cofactor.

The glycine cleavage system catalyzes the degradation of glycine. The H protein shuttles the methylamine group of glycine from the P protein to the T protein. This chain is Glycine cleavage system H protein, found in Trichormus variabilis (strain ATCC 29413 / PCC 7937) (Anabaena variabilis).